A 622-amino-acid chain; its full sequence is Phosphoribomutase (622 aa).

Substrate is bound by residues Thr-57, Arg-61, 158–159 (SH), and Lys-168. Ser-158 functions as the Phosphoserine intermediate in the catalytic mechanism. Position 158 (Ser-158) interacts with Mg(2+). Ser-158 is modified (phosphoserine). The Mg(2+) site is built by Asp-325, Asp-327, and Asp-329. Substrate contacts are provided by residues 329–330 (DR), Thr-404, 428–430 (EEA), and Lys-442.

The protein belongs to the phosphohexose mutase family. It depends on Mg(2+) as a cofactor.

The protein localises to the cytoplasm. Its subcellular location is the nucleus. The enzyme catalyses alpha-D-ribose 1-phosphate = D-ribose 5-phosphate. Functionally, major phosphoribomutase that converts ribose 1-phosphate to ribose 5-phosphate. Involved in ribose salvage via the pentose phosphate pathway. The sequence is that of Phosphoribomutase from Saccharomyces cerevisiae (strain ATCC 204508 / S288c) (Baker's yeast).